A 441-amino-acid chain; its full sequence is Glutamate-1-semialdehyde 2,1-aminomutase (441 aa).

At Lys279 the chain carries N6-(pyridoxal phosphate)lysine.

It belongs to the class-III pyridoxal-phosphate-dependent aminotransferase family. HemL subfamily. In terms of assembly, homodimer. Requires pyridoxal 5'-phosphate as cofactor.

It localises to the cytoplasm. The catalysed reaction is (S)-4-amino-5-oxopentanoate = 5-aminolevulinate. The protein operates within porphyrin-containing compound metabolism; protoporphyrin-IX biosynthesis; 5-aminolevulinate from L-glutamyl-tRNA(Glu): step 2/2. The protein is Glutamate-1-semialdehyde 2,1-aminomutase of Leptospira borgpetersenii serovar Hardjo-bovis (strain JB197).